Consider the following 229-residue polypeptide: MSDSQEIPYHNQLKNRFRGYFPVIIDVETAGFDAKKDALLELAAITLKMDENGYLHPDQKCHFHIEPFEGANINPESLKFNGIDIHNPLRGAVSELNAITGLFQMVRRGQKDADCQRSIIVAHNAAFDQSFVMAAAERTGVKRNPFHPFGMFDTASLAGLMFGQTVLVKACQAAKIPFDGKQAHSALYDTERTAKLFCYMVNHLKDLGGFPHIASELEQEKTTEKETAL.

One can recognise an Exonuclease domain in the interval 23 to 197 (VIIDVETAGF…YDTERTAKLF (175 aa)). D26, E28, H184, and D189 together coordinate Mg(2+). H184 acts as the Proton donor/acceptor in catalysis.

The protein belongs to the RNase T family. As to quaternary structure, homodimer. It depends on Mg(2+) as a cofactor.

Functionally, trims short 3' overhangs of a variety of RNA species, leaving a one or two nucleotide 3' overhang. Responsible for the end-turnover of tRNA: specifically removes the terminal AMP residue from uncharged tRNA (tRNA-C-C-A). Also appears to be involved in tRNA biosynthesis. The sequence is that of Ribonuclease T from Haemophilus influenzae (strain PittGG).